The chain runs to 453 residues: MSQSPKVGFVSLGCPKALVDSEQIITQLRAEGYEISGTYDGADLVVVNTCGFIDEAVQESLDAIGEALTENGKVIVTGCLGAKSSASGSNLIEEVHPKVLAVTGPHAVGEVMQAVHSHLPKPHDPFVDLVPAAGIKLTPRHYAYLKISEGCNHRCTFCIIPSMRGDLVSRPVAEVMLEAENLFKSGVKELLVISQDTSAYGVDVKYRTGFWNGKPIKTRMTDLVAALGELAAQYGAWVRLHYVYPYPSVDEVIPLMADGPFKGHVLPYLDVPFQHAHPEVLKRMKRPANAEKVLERVQKWREICPDLTIRSTFIAGFPGETEEQFETLLDFIREAELDRVGCFAYSPVEGASANELDGALPDDVREERRARFMEVAEEVSAQRIQRKVGKTLKVLIDEVSAEGGIGRTAADAPEIDGVVYVEPATKASKRYKVGDFVSVKITGADGHDLWGEV.

An MTTase N-terminal domain is found at 5-120 (PKVGFVSLGC…VMQAVHSHLP (116 aa)). Positions 14, 50, 79, 151, 155, and 158 each coordinate [4Fe-4S] cluster. The Radical SAM core domain maps to 137–382 (LTPRHYAYLK…MEVAEEVSAQ (246 aa)). Residues 385–453 (QRKVGKTLKV…ADGHDLWGEV (69 aa)) form the TRAM domain.

The protein belongs to the methylthiotransferase family. RimO subfamily. [4Fe-4S] cluster serves as cofactor.

The protein resides in the cytoplasm. The catalysed reaction is L-aspartate(89)-[ribosomal protein uS12]-hydrogen + (sulfur carrier)-SH + AH2 + 2 S-adenosyl-L-methionine = 3-methylsulfanyl-L-aspartate(89)-[ribosomal protein uS12]-hydrogen + (sulfur carrier)-H + 5'-deoxyadenosine + L-methionine + A + S-adenosyl-L-homocysteine + 2 H(+). Catalyzes the methylthiolation of an aspartic acid residue of ribosomal protein uS12. This Burkholderia ambifaria (strain ATCC BAA-244 / DSM 16087 / CCUG 44356 / LMG 19182 / AMMD) (Burkholderia cepacia (strain AMMD)) protein is Ribosomal protein uS12 methylthiotransferase RimO.